Reading from the N-terminus, the 359-residue chain is Cyclic AMP response element-binding protein B (359 aa).

Disordered regions lie at residues 1 to 73 (MDNS…AQGG) and 185 to 238 (VRNK…FTEI). Residues 9 to 32 (NGNSSAASGSNDVVDVVAQQAAAA) show a composition bias toward low complexity. A compositionally biased stretch (gly residues) spans 33 to 47 (VGGGGGGGGGGGGGN). Positions 48–70 (PQQQQQNPQSTTAGGPTGATNNA) are enriched in low complexity. Residues 198-257 (KPEPNTQHPEDSDESLSDDDSQHHRSELTRRPSYNKIFTEISGPDMSGASLPMSDGVLNS) form the KID domain. Phosphoserine occurs at positions 209, 212, and 214. Over residues 217 to 227 (DSQHHRSELTR) the composition is skewed to basic and acidic residues. The 60-residue stretch at 300–359 (TRKREIRLQKNREAARECRRKKKEYIKCLENRVAVLENQNKALIEELKSLKELYCQTKND) folds into the bZIP domain. Residues 301 to 326 (RKREIRLQKNREAARECRRKKKEYIK) are basic motif. A leucine-zipper region spans residues 328-349 (LENRVAVLENQNKALIEELKSL).

It belongs to the bZIP family. ATF subfamily. Homodimer. As to expression, most cells of the adult brain; cell bodies, but not neuropil.

Its subcellular location is the nucleus. Isoform E is a PKA-dependent transcriptional activator. Isoform J is a direct antagonist of activation by isoform E in cell culture. Binds the cAMP response element (CRE) (consensus: 5'-GTGACGT[AC][AG]-3'), a sequence present in many viral and cellular promoters. Has a role in long-term memory. This chain is Cyclic AMP response element-binding protein B, found in Drosophila melanogaster (Fruit fly).